Here is a 129-residue protein sequence, read N- to C-terminus: uncharacterized protein (129 aa).

The disordered stretch occupies residues 34–57 (SAPLRPPRELHAAPPPATPTQTVV).

This is an uncharacterized protein from Homo sapiens (Human).